The following is a 333-amino-acid chain: Foldase protein PrsA (333 aa).

Residues 1–22 (MKKSTKLLAGIVTLASAMTLAA) form the signal peptide. The N-palmitoyl cysteine moiety is linked to residue Cys23. The S-diacylglycerol cysteine moiety is linked to residue Cys23. The PpiC domain occupies 145-240 (TPEMTTQVTT…NKFYIVKVTK (96 aa)). Positions 301–333 (DKKASKANTSKSDQKSSSDSSKDSQSSKSKSEK) are disordered. Over residues 312–322 (SDQKSSSDSSK) the composition is skewed to basic and acidic residues. Residues 323–333 (DSQSSKSKSEK) show a composition bias toward low complexity.

It belongs to the PrsA family.

The protein resides in the cell membrane. The catalysed reaction is [protein]-peptidylproline (omega=180) = [protein]-peptidylproline (omega=0). In terms of biological role, plays a major role in protein secretion by helping the post-translocational extracellular folding of several secreted proteins. The protein is Foldase protein PrsA of Streptococcus equi subsp. equi (strain 4047).